The following is a 441-amino-acid chain: Endothelin receptor type B (441 aa).

The N-terminal stretch at 1–26 (MQPLPSLCGRALVALILACGVAGIQA) is a signal peptide. The Extracellular segment spans residues 27-100 (EEREFPPAGA…GPIEIKETFK (74 aa)). The disordered stretch occupies residues 30–87 (EFPPAGATQPLPGTGEMMETPTETSWPGRSNASDPRSSATPQIPRGGRMAGIPPRTPP). Residues 41–53 (PGTGEMMETPTET) show a composition bias toward low complexity. Residues 54 to 70 (SWPGRSNASDPRSSATP) show a composition bias toward polar residues. Residues 101–125 (YINTVVSCLVFVLGIIGNSTLLRII) traverse the membrane as a helical segment. At 126 to 136 (YKNKCMRNGPN) the chain is on the cytoplasmic side. Residues 137–162 (ILIASLALGDLLHIIIDIPINTYKLL) form a helical membrane-spanning segment. Residues 163–174 (AKDWPFGVEMCK) are Extracellular-facing. Cysteine 173 and cysteine 254 form a disulfide bridge. The helical transmembrane segment at 175–196 (LVPFIQKASVGITVLSLCALSI) threads the bilayer. Topologically, residues 197 to 217 (DRYRAVASWSRIKGIGVPKWT) are cytoplasmic. Residues 218–242 (AVEIVLIWVVSVVLAVPEAVGFDII) traverse the membrane as a helical segment. The Extracellular portion of the chain corresponds to 243-270 (TSDHIGNKLRICLLHPTQKTAFMQFYKT). A helical transmembrane segment spans residues 271–295 (AKDWWLFSFYFCLPLAITALFYTLM). The Cytoplasmic segment spans residues 296–323 (TCEMLRKKSGMQIALNDHLKQRREVAKT). Serine 304 bears the Phosphoserine mark. Residues 324-349 (VFCLVLVFALCWLPLHLSRILKLTLY) traverse the membrane as a helical segment. Topologically, residues 350 to 361 (DQHDPRRCEFLS) are extracellular. A helical transmembrane segment spans residues 362 to 388 (FLLVLDYIGINMASLNSCINPIALYLV). Residues 389 to 441 (SKRFKNCFKSCLCCWCQSFEEKQSLEEKQSCLKFKANDHGYDNFRSSNKYSSS) lie on the Cytoplasmic side of the membrane. 2 S-palmitoyl cysteine lipidation sites follow: cysteine 402 and cysteine 404. Phosphoserine is present on residues serine 418, serine 434, and serine 435. Phosphotyrosine is present on tyrosine 438. Phosphoserine occurs at positions 439, 440, and 441.

The protein belongs to the G-protein coupled receptor 1 family. Endothelin receptor subfamily. EDNRB sub-subfamily. Post-translationally, it is not sure whether phosphorylation is on Ser-434 or Ser-435.

Its subcellular location is the cell membrane. Functionally, non-specific receptor for endothelin 1, 2, and 3. Mediates its action by association with G proteins that activate a phosphatidylinositol-calcium second messenger system. The chain is Endothelin receptor type B (EDNRB) from Bos taurus (Bovine).